Here is a 649-residue protein sequence, read N- to C-terminus: 1-deoxy-D-xylulose-5-phosphate synthase (649 aa).

Thiamine diphosphate is bound by residues histidine 74 and glycine 115–alanine 117. Aspartate 146 contacts Mg(2+). Thiamine diphosphate contacts are provided by residues glycine 147–alanine 148, asparagine 176, tyrosine 292, and glutamate 375. Residue asparagine 176 participates in Mg(2+) binding.

This sequence belongs to the transketolase family. DXPS subfamily. In terms of assembly, homodimer. It depends on Mg(2+) as a cofactor. Thiamine diphosphate is required as a cofactor.

It carries out the reaction D-glyceraldehyde 3-phosphate + pyruvate + H(+) = 1-deoxy-D-xylulose 5-phosphate + CO2. It participates in metabolic intermediate biosynthesis; 1-deoxy-D-xylulose 5-phosphate biosynthesis; 1-deoxy-D-xylulose 5-phosphate from D-glyceraldehyde 3-phosphate and pyruvate: step 1/1. Catalyzes the acyloin condensation reaction between C atoms 2 and 3 of pyruvate and glyceraldehyde 3-phosphate to yield 1-deoxy-D-xylulose-5-phosphate (DXP). This chain is 1-deoxy-D-xylulose-5-phosphate synthase, found in Synechococcus sp. (strain JA-3-3Ab) (Cyanobacteria bacterium Yellowstone A-Prime).